The following is a 317-amino-acid chain: 2,3-dihydroxyphenylpropionate/2,3-dihydroxicinnamic acid 1,2-dioxygenase (317 aa).

His-115 functions as the Proton donor in the catalytic mechanism. Residue His-179 is the Proton acceptor of the active site.

Belongs to the LigB/MhpB extradiol dioxygenase family. Homotetramer. Fe(2+) serves as cofactor.

It catalyses the reaction 3-(2,3-dihydroxyphenyl)propanoate + O2 = (2Z,4E)-2-hydroxy-6-oxonona-2,4-dienedioate + H(+). The enzyme catalyses (2E)-3-(2,3-dihydroxyphenyl)prop-2-enoate + O2 = (2Z,4E,7E)-2-hydroxy-6-oxonona-2,4,7-trienedioate + H(+). It participates in aromatic compound metabolism; 3-phenylpropanoate degradation. Its function is as follows. Catalyzes the non-heme iron(II)-dependent oxidative cleavage of 2,3-dihydroxyphenylpropionic acid and 2,3-dihydroxicinnamic acid into 2-hydroxy-6-ketononadienedioate and 2-hydroxy-6-ketononatrienedioate, respectively. The protein is 2,3-dihydroxyphenylpropionate/2,3-dihydroxicinnamic acid 1,2-dioxygenase of Burkholderia vietnamiensis (strain G4 / LMG 22486) (Burkholderia cepacia (strain R1808)).